The following is a 211-amino-acid chain: Uracil phosphoribosyltransferase (211 aa).

Residues R81, R106, and 133-141 (DPMLATGNS) each bind 5-phospho-alpha-D-ribose 1-diphosphate. Uracil contacts are provided by residues I196 and 201–203 (GDA). Position 202 (D202) interacts with 5-phospho-alpha-D-ribose 1-diphosphate.

Belongs to the UPRTase family. Mg(2+) is required as a cofactor.

It carries out the reaction UMP + diphosphate = 5-phospho-alpha-D-ribose 1-diphosphate + uracil. It participates in pyrimidine metabolism; UMP biosynthesis via salvage pathway; UMP from uracil: step 1/1. Its activity is regulated as follows. Allosterically activated by GTP. Its function is as follows. Catalyzes the conversion of uracil and 5-phospho-alpha-D-ribose 1-diphosphate (PRPP) to UMP and diphosphate. This chain is Uracil phosphoribosyltransferase, found in Paracoccus denitrificans (strain Pd 1222).